Here is a 325-residue protein sequence, read N- to C-terminus: ATP synthase gamma chain (325 aa).

The protein belongs to the ATPase gamma chain family. As to quaternary structure, F-type ATPases have 2 components, CF(1) - the catalytic core - and CF(0) - the membrane proton channel. CF(1) has five subunits: alpha(3), beta(3), gamma(1), delta(1), epsilon(1). CF(0) has three main subunits: a, b and c.

The protein resides in the cell membrane. Its function is as follows. Produces ATP from ADP in the presence of a proton gradient across the membrane. The gamma chain is believed to be important in regulating ATPase activity and the flow of protons through the CF(0) complex. This Corynebacterium urealyticum (strain ATCC 43042 / DSM 7109) protein is ATP synthase gamma chain.